We begin with the raw amino-acid sequence, 514 residues long: GMP synthase [glutamine-hydrolyzing] (514 aa).

The Glutamine amidotransferase type-1 domain occupies 7-197; the sequence is KVLILDFGSQ…LFNICKCERN (191 aa). Residue cysteine 84 is the Nucleophile of the active site. Residues histidine 171 and glutamate 173 contribute to the active site. A GMPS ATP-PPase domain is found at 198-389; that stretch reads WNMGSFIEYE…LKLPEDIVYR (192 aa). Residue 225–231 participates in ATP binding; the sequence is SGGVDSS.

In terms of assembly, homodimer.

The enzyme catalyses XMP + L-glutamine + ATP + H2O = GMP + L-glutamate + AMP + diphosphate + 2 H(+). The protein operates within purine metabolism; GMP biosynthesis; GMP from XMP (L-Gln route): step 1/1. In terms of biological role, catalyzes the synthesis of GMP from XMP. The protein is GMP synthase [glutamine-hydrolyzing] of Brachyspira hyodysenteriae (strain ATCC 49526 / WA1).